Reading from the N-terminus, the 172-residue chain is uncharacterized protein (172 aa).

It belongs to the archaeal NMN adenylyltransferase family.

This is an uncharacterized protein from Aeropyrum pernix (strain ATCC 700893 / DSM 11879 / JCM 9820 / NBRC 100138 / K1).